A 146-amino-acid chain; its full sequence is Large ribosomal subunit protein uL15 (146 aa).

The segment covering 1–13 (MKLHELKPSEGSR) has biased composition (basic and acidic residues). A disordered region spans residues 1–57 (MKLHELKPSEGSRKTRNRVGRGIGSGNGKTAGKGHKGQNARSGGGVRPGFEGGQMPL). 2 stretches are compositionally biased toward gly residues: residues 21-31 (RGIGSGNGKTA) and 42-52 (SGGGVRPGFEG).

The protein belongs to the universal ribosomal protein uL15 family. Part of the 50S ribosomal subunit.

Binds to the 23S rRNA. The chain is Large ribosomal subunit protein uL15 from Bacillus subtilis (strain 168).